The primary structure comprises 128 residues: Fluoride-specific ion channel FluC (128 aa).

A run of 4 helical transmembrane segments spans residues 5-25, 35-55, 67-87, and 96-116; these read IVAI…LSLA, LGTL…AVVF, LFVI…SVEV, and FGWA…LTAL. Glycine 75 and threonine 78 together coordinate Na(+).

This sequence belongs to the fluoride channel Fluc/FEX (TC 1.A.43) family.

Its subcellular location is the cell inner membrane. It carries out the reaction fluoride(in) = fluoride(out). Its activity is regulated as follows. Na(+) is not transported, but it plays an essential structural role and its presence is essential for fluoride channel function. Functionally, fluoride-specific ion channel. Important for reducing fluoride concentration in the cell, thus reducing its toxicity. The sequence is that of Fluoride-specific ion channel FluC from Burkholderia orbicola (strain MC0-3).